The following is a 177-amino-acid chain: Protein GrpE (177 aa).

The protein belongs to the GrpE family. Homodimer.

It is found in the cytoplasm. Functionally, participates actively in the response to hyperosmotic and heat shock by preventing the aggregation of stress-denatured proteins, in association with DnaK and GrpE. It is the nucleotide exchange factor for DnaK and may function as a thermosensor. Unfolded proteins bind initially to DnaJ; upon interaction with the DnaJ-bound protein, DnaK hydrolyzes its bound ATP, resulting in the formation of a stable complex. GrpE releases ADP from DnaK; ATP binding to DnaK triggers the release of the substrate protein, thus completing the reaction cycle. Several rounds of ATP-dependent interactions between DnaJ, DnaK and GrpE are required for fully efficient folding. The sequence is that of Protein GrpE from Thermus thermophilus (strain ATCC BAA-163 / DSM 7039 / HB27).